The sequence spans 239 residues: Cysteine-rich venom protein ophanin (239 aa).

A signal peptide spans 1–18 (MIAFTLLSLAAVLQQSFG). Positions 37 to 165 (VDLHNSLRRS…EYSYFYVCQY (129 aa)) constitute an SCP domain. 8 disulfides stabilise this stretch: Cys74–Cys152, Cys91–Cys166, Cys147–Cys163, Cys185–Cys192, Cys188–Cys197, Cys201–Cys234, Cys210–Cys228, and Cys219–Cys232. One can recognise a ShKT domain in the interval 201–234 (CTLYNEYTNCDSLVKQSSCQDEWIKSKCPASCFC).

As to expression, expressed by the venom gland.

Its subcellular location is the secreted. In terms of biological role, weakly blocks contraction of smooth muscle elicited by high potassium-induced depolarization, but does not block caffeine-stimulated contraction. May target voltage-gated calcium channels on smooth muscle. The sequence is that of Cysteine-rich venom protein ophanin from Ophiophagus hannah (King cobra).